We begin with the raw amino-acid sequence, 302 residues long: RNA polymerase II holoenzyme cyclin-like subunit (302 aa).

One can recognise a Cyclin N-terminal domain in the interval 53–142; that stretch reads QQLIKLGKRM…LGECEFSLIS (90 aa).

The protein belongs to the cyclin family. Cyclin C subfamily. As to quaternary structure, component of the srb8-11 complex, a regulatory module of the Mediator complex.

The protein resides in the nucleus. In terms of biological role, component of the srb8-11 complex. The srb8-11 complex is a regulatory module of the Mediator complex which is itself involved in regulation of basal and activated RNA polymerase II-dependent transcription. The srb8-11 complex may be involved in the transcriptional repression of a subset of genes regulated by Mediator. It may inhibit the association of the Mediator complex with RNA polymerase II to form the holoenzyme complex. The srb8-11 complex phosphorylates the C-terminal domain (CTD) of the largest subunit of RNA polymerase II. This Aspergillus clavatus (strain ATCC 1007 / CBS 513.65 / DSM 816 / NCTC 3887 / NRRL 1 / QM 1276 / 107) protein is RNA polymerase II holoenzyme cyclin-like subunit (ssn8).